A 228-amino-acid chain; its full sequence is MIIITPITNDPTTALLRLMAWLSPVFPVGSFSYSHGLERAVHDGLVVDAAGLQDWLQWLVRRGSGWNDAVLCAESWRCAMKGEDLHEIAELAEALAGSRERHMETMLQGGAFLAAARSWPCEIFDRLPPDCAYPVAVGAVAGGHGVPLAQALAAFLQAFCINLLQASIRLSVTGQSGVTAIMAALEPVLGETAARAALSSMEDLGSATFIADIMAMKHETQHSRLFRS.

This sequence belongs to the UreF family. As to quaternary structure, ureD, UreF and UreG form a complex that acts as a GTP-hydrolysis-dependent molecular chaperone, activating the urease apoprotein by helping to assemble the nickel containing metallocenter of UreC. The UreE protein probably delivers the nickel.

Its subcellular location is the cytoplasm. Required for maturation of urease via the functional incorporation of the urease nickel metallocenter. The sequence is that of Urease accessory protein UreF 1 from Brucella canis (strain ATCC 23365 / NCTC 10854 / RM-666).